The following is a 420-amino-acid chain: Dynein axonemal assembly factor 4 (420 aa).

Positions V3–S87 constitute a CS domain. The interval E7–S103 is mediates interaction with ESR1 and STUB1. Residues E164–A192 are compositionally biased toward basic and acidic residues. The interval E164–R212 is disordered. TPR repeat units lie at residues P288–I321, P322–P355, and M364–N397.

As to quaternary structure, interacts with ZMYND10. Interacts with ESR1 and ESR2. Interacts with STUB1. Interacts with DNAAF2. Interacts with CCT3, CCT4, CCT5 and CCT8. Interacts with DNAAF6/PIH1D3.

The protein localises to the nucleus. The protein resides in the cytoplasm. It is found in the dynein axonemal particle. Its subcellular location is the cell projection. It localises to the neuron projection. Involved in neuronal migration during development of the cerebral neocortex. May regulate the stability and proteasomal degradation of the estrogen receptors that play an important role in neuronal differentiation, survival and plasticity. Axonemal dynein assembly factor required for ciliary motility. The sequence is that of Dynein axonemal assembly factor 4 from Mus musculus (Mouse).